A 291-amino-acid chain; its full sequence is Urease accessory protein UreD (291 aa).

This sequence belongs to the UreD family. As to quaternary structure, ureD, UreF and UreG form a complex that acts as a GTP-hydrolysis-dependent molecular chaperone, activating the urease apoprotein by helping to assemble the nickel containing metallocenter of UreC. The UreE protein probably delivers the nickel.

Its subcellular location is the cytoplasm. Functionally, required for maturation of urease via the functional incorporation of the urease nickel metallocenter. This Acinetobacter baumannii (strain SDF) protein is Urease accessory protein UreD.